The chain runs to 426 residues: Serine--tRNA ligase (426 aa).

Position 233-235 (233-235 (TAE)) interacts with L-serine. 264-266 (RAE) provides a ligand contact to ATP. Glutamate 287 lines the L-serine pocket. 351-354 (EISS) contacts ATP. Serine 387 is an L-serine binding site.

The protein belongs to the class-II aminoacyl-tRNA synthetase family. Type-1 seryl-tRNA synthetase subfamily. In terms of assembly, homodimer. The tRNA molecule binds across the dimer.

Its subcellular location is the cytoplasm. It carries out the reaction tRNA(Ser) + L-serine + ATP = L-seryl-tRNA(Ser) + AMP + diphosphate + H(+). The catalysed reaction is tRNA(Sec) + L-serine + ATP = L-seryl-tRNA(Sec) + AMP + diphosphate + H(+). The protein operates within aminoacyl-tRNA biosynthesis; selenocysteinyl-tRNA(Sec) biosynthesis; L-seryl-tRNA(Sec) from L-serine and tRNA(Sec): step 1/1. In terms of biological role, catalyzes the attachment of serine to tRNA(Ser). Is also able to aminoacylate tRNA(Sec) with serine, to form the misacylated tRNA L-seryl-tRNA(Sec), which will be further converted into selenocysteinyl-tRNA(Sec). The polypeptide is Serine--tRNA ligase (Clostridium kluyveri (strain NBRC 12016)).